Reading from the N-terminus, the 354-residue chain is Cyclin-D1-2 (354 aa).

Disordered regions lie at residues 37–74 (FFQQ…EEEE) and 331–354 (TTAT…RRKM). Composition is skewed to low complexity over residues 44–66 (PAPA…AGSC) and 331–346 (TTAT…VSSS).

The protein belongs to the cyclin family. Cyclin D subfamily.

In Oryza sativa subsp. japonica (Rice), this protein is Cyclin-D1-2 (CYCD1-2).